Reading from the N-terminus, the 475-residue chain is Methylenomycin A resistance protein (475 aa).

14 helical membrane passes run 28-48 (ITAL…VNVA), 65-85 (WIVD…GGLA), 93-113 (VYLW…LAPT), 123-143 (VQGA…VFSF), 152-172 (MLGL…TVGG), 173-193 (LMVS…IGAI), 212-232 (LAVP…FALI), 240-260 (TAGP…LLAL), 285-305 (LVGF…GLYF), 314-334 (FQAG…NIVY), 346-366 (LLTA…TITA), 371-391 (WVVA…SPGM), 416-436 (QIGS…TSDW), and 439-459 (GAAI…LSAW).

The protein belongs to the major facilitator superfamily.

It is found in the cell membrane. Its function is as follows. Resistance to the epoxide antibiotic methylenomycin A; probably by mediating its efflux. This chain is Methylenomycin A resistance protein (mmr), found in Streptomyces coelicolor (strain ATCC BAA-471 / A3(2) / M145).